A 59-amino-acid polypeptide reads, in one-letter code: Photosystem II reaction center protein K (59 aa).

Positions 1-22 (MLNIFSLICLNSDLYSSRFFLA) are excised as a propeptide. The helical transmembrane segment at 38-58 (MPVIPLFFLLLAFVWQAAVSF) threads the bilayer.

Belongs to the PsbK family. PSII is composed of 1 copy each of membrane proteins PsbA, PsbB, PsbC, PsbD, PsbE, PsbF, PsbH, PsbI, PsbJ, PsbK, PsbL, PsbM, PsbT, PsbX, PsbY, PsbZ, Psb30/Ycf12, at least 3 peripheral proteins of the oxygen-evolving complex and a large number of cofactors. It forms dimeric complexes.

It localises to the plastid. It is found in the chloroplast thylakoid membrane. Functionally, one of the components of the core complex of photosystem II (PSII). PSII is a light-driven water:plastoquinone oxidoreductase that uses light energy to abstract electrons from H(2)O, generating O(2) and a proton gradient subsequently used for ATP formation. It consists of a core antenna complex that captures photons, and an electron transfer chain that converts photonic excitation into a charge separation. This Oenothera elata subsp. hookeri (Hooker's evening primrose) protein is Photosystem II reaction center protein K.